The following is a 345-amino-acid chain: Phosphoribosylformylglycinamidine cyclo-ligase (345 aa).

Belongs to the AIR synthase family.

The protein resides in the cytoplasm. The enzyme catalyses 2-formamido-N(1)-(5-O-phospho-beta-D-ribosyl)acetamidine + ATP = 5-amino-1-(5-phospho-beta-D-ribosyl)imidazole + ADP + phosphate + H(+). It participates in purine metabolism; IMP biosynthesis via de novo pathway; 5-amino-1-(5-phospho-D-ribosyl)imidazole from N(2)-formyl-N(1)-(5-phospho-D-ribosyl)glycinamide: step 2/2. The polypeptide is Phosphoribosylformylglycinamidine cyclo-ligase (Methanopyrus kandleri (strain AV19 / DSM 6324 / JCM 9639 / NBRC 100938)).